The chain runs to 556 residues: Formate--tetrahydrofolate ligase (556 aa).

65–72 (TPAGEGKT) provides a ligand contact to ATP.

Belongs to the formate--tetrahydrofolate ligase family.

It catalyses the reaction (6S)-5,6,7,8-tetrahydrofolate + formate + ATP = (6R)-10-formyltetrahydrofolate + ADP + phosphate. It participates in one-carbon metabolism; tetrahydrofolate interconversion. In Hyphomonas neptunium (strain ATCC 15444), this protein is Formate--tetrahydrofolate ligase.